The following is a 241-amino-acid chain: MSKDTIFSTPIEKLGDFTFDENVAEVFPDMIQRSVPGYSNIITAIGMLAERFVTADSNVYDLGCSRGAATLSARRNIKQANVKIIGVDNSQPMAERARQHIHAYHSEIPVEILCDDIRNIAIENASMVILNFTLQFLPPEDRRALLEKIYRGLNQGGLLVLSEKFRFEDETINNLLIDLHHTFKRANGYSELEVSQKRAALENVMRIDSINTHKVRLKNVGFSHVELWFQCFNFGSMIAIK.

S-adenosyl-L-methionine is bound by residues Tyr-38, 63–65, 88–89, 116–117, Asn-131, and Arg-198; these read GCS, DN, and DI.

It belongs to the class I-like SAM-binding methyltransferase superfamily. Cx-SAM synthase family. As to quaternary structure, homodimer.

The enzyme catalyses prephenate + S-adenosyl-L-methionine = carboxy-S-adenosyl-L-methionine + 3-phenylpyruvate + H2O. Its function is as follows. Catalyzes the conversion of S-adenosyl-L-methionine (SAM) to carboxy-S-adenosyl-L-methionine (Cx-SAM). The chain is Carboxy-S-adenosyl-L-methionine synthase from Mannheimia succiniciproducens (strain KCTC 0769BP / MBEL55E).